Here is a 498-residue protein sequence, read N- to C-terminus: ATP synthase subunit beta, chloroplastic (498 aa).

172 to 179 provides a ligand contact to ATP; that stretch reads GGAGVGKT.

Belongs to the ATPase alpha/beta chains family. F-type ATPases have 2 components, CF(1) - the catalytic core - and CF(0) - the membrane proton channel. CF(1) has five subunits: alpha(3), beta(3), gamma(1), delta(1), epsilon(1). CF(0) has four main subunits: a(1), b(1), b'(1) and c(9-12).

It localises to the plastid. The protein resides in the chloroplast thylakoid membrane. The enzyme catalyses ATP + H2O + 4 H(+)(in) = ADP + phosphate + 5 H(+)(out). Produces ATP from ADP in the presence of a proton gradient across the membrane. The catalytic sites are hosted primarily by the beta subunits. The polypeptide is ATP synthase subunit beta, chloroplastic (Carica papaya (Papaya)).